We begin with the raw amino-acid sequence, 261 residues long: Succinate dehydrogenase iron-sulfur subunit (261 aa).

The 2Fe-2S ferredoxin-type domain occupies 28-119 (RKVQVYRYDP…DIKIYPLPHM (92 aa)). [2Fe-2S] cluster-binding residues include Cys-80, Cys-85, and Cys-100. Residues 161–191 (DREKLDGLYECILCACCSTSCPSYWWNSDKY) enclose the 4Fe-4S ferredoxin-type domain. [4Fe-4S] cluster contacts are provided by Cys-171, Cys-174, and Cys-177. Residue Cys-181 coordinates [3Fe-4S] cluster. Trp-186 provides a ligand contact to a ubiquinone. [3Fe-4S] cluster is bound by residues Cys-228 and Cys-234. Cys-238 contributes to the [4Fe-4S] cluster binding site.

This sequence belongs to the succinate dehydrogenase/fumarate reductase iron-sulfur protein family. Part of an enzyme complex containing four subunits: a flavoprotein, an iron-sulfur, cytochrome b-556, and a hydrophobic anchor protein. [2Fe-2S] cluster serves as cofactor. It depends on [3Fe-4S] cluster as a cofactor. [4Fe-4S] cluster is required as a cofactor.

It carries out the reaction a quinone + succinate = fumarate + a quinol. It functions in the pathway carbohydrate metabolism; tricarboxylic acid cycle; fumarate from succinate (bacterial route): step 1/1. The polypeptide is Succinate dehydrogenase iron-sulfur subunit (sdhB) (Rickettsia typhi (strain ATCC VR-144 / Wilmington)).